Reading from the N-terminus, the 558-residue chain is Suppressor of zyg-1 protein 20 (558 aa).

Positions 45-146 (KVKAEESSGV…ARNRILGTEY (102 aa)) constitute an SUZ domain. Disordered stretches follow at residues 50-132 (ESSG…ERQA), 205-241 (FTQP…QQSL), and 374-558 (QRNQ…NRPQ). Residues 69-81 (EEPKRVFLRRPKD) are compositionally biased toward basic and acidic residues. Residues 94-109 (PPTSADTEEQPVTNVR) are compositionally biased toward polar residues. Basic and acidic residues predominate over residues 117–131 (NQKEKQPAPTYEERQ). Composition is skewed to low complexity over residues 374-394 (QRNQ…QNRQ) and 424-477 (NNGQ…QQQQ). Composition is skewed to polar residues over residues 478–508 (NKSG…SQNP) and 545–558 (SASQ…NRPQ).

As to quaternary structure, interacts (via C-terminus) with atx-2 (via C-terminus); the interaction is RNA independent. Interacts with let-92. Post-translationally, phosphorylated. May be dephosphorylated by let-92.

Its subcellular location is the cytoplasm. It is found in the cytoskeleton. It localises to the microtubule organizing center. The protein localises to the centrosome. The protein resides in the centriole. Its subcellular location is the nucleus. It is found in the nucleolus. It localises to the chromosome. In terms of biological role, RNA binding protein that is required for normal cell division and cytokinesis during embryonic development. Functions with RNA-binding protein atx-2 to ensure embryonic cell division, and to this end, plays a role in the regulation of centrosome assembly, position and size, and in astral microtubule outgrowth and nucleation. Furthermore, negatively regulates the levels of the protein kinase zyg-1 at the centrosome. Also involved in ensuring centrosome attachment to the nuclear envelope. The protein is Suppressor of zyg-1 protein 20 of Caenorhabditis elegans.